A 627-amino-acid polypeptide reads, in one-letter code: Putative polyketide hydroxylase (627 aa).

Residues 22 to 51 (PVLV…LVER) and 309 to 319 (YRSGRVLLAGD) each bind FAD. The disordered stretch occupies residues 370-469 (AEATSARAAH…GGGPGGGGPQ (100 aa)). Over residues 395-469 (AGGGGPGAGT…GGGPGGGGPQ (75 aa)) the composition is skewed to gly residues.

The protein belongs to the PheA/TfdB FAD monooxygenase family. FAD is required as a cofactor.

Its function is as follows. Involved in developmentally regulated synthesis of a compound biosynthetically related to polyketide antibiotics which is essential for spore color in Streptococcus coelicolor. This Streptomyces coelicolor (strain ATCC BAA-471 / A3(2) / M145) protein is Putative polyketide hydroxylase.